Consider the following 126-residue polypeptide: Small ribosomal subunit protein uS13 (126 aa).

Positions 96-126 (LPVHGQRTHTNARTRKGPRRAIAGKKKAGKK) are disordered.

It belongs to the universal ribosomal protein uS13 family. As to quaternary structure, part of the 30S ribosomal subunit. Forms a loose heterodimer with protein S19. Forms two bridges to the 50S subunit in the 70S ribosome.

Functionally, located at the top of the head of the 30S subunit, it contacts several helices of the 16S rRNA. In the 70S ribosome it contacts the 23S rRNA (bridge B1a) and protein L5 of the 50S subunit (bridge B1b), connecting the 2 subunits; these bridges are implicated in subunit movement. Contacts the tRNAs in the A and P-sites. This Frankia alni (strain DSM 45986 / CECT 9034 / ACN14a) protein is Small ribosomal subunit protein uS13.